Here is a 97-residue protein sequence, read N- to C-terminus: UPF0729 protein AAEL015238 (97 aa).

Residues 69-97 (EVAASGSGSNGTATAVGSEGEAEETKKSQ) form a disordered region. A compositionally biased stretch (polar residues) spans 74–83 (GSGSNGTATA).

It belongs to the UPF0729 family.

In Aedes aegypti (Yellowfever mosquito), this protein is UPF0729 protein AAEL015238.